The following is a 580-amino-acid chain: Putative Xaa-Pro dipeptidyl-peptidase (580 aa).

Active-site charge relay system residues include Ser-207, Asp-319, and His-350.

The protein belongs to the peptidase S15 family.

The catalysed reaction is Hydrolyzes Xaa-Pro-|- bonds to release unblocked, N-terminal dipeptides from substrates including Ala-Pro-|-p-nitroanilide and (sequentially) Tyr-Pro-|-Phe-Pro-|-Gly-Pro-|-Ile.. The polypeptide is Putative Xaa-Pro dipeptidyl-peptidase (Bacillus cereus (strain ATCC 14579 / DSM 31 / CCUG 7414 / JCM 2152 / NBRC 15305 / NCIMB 9373 / NCTC 2599 / NRRL B-3711)).